The primary structure comprises 637 residues: Chaperone protein HtpG (637 aa).

Residues 1–328 (MADIEELKFD…SSDLPLNISR (328 aa)) form an a; substrate-binding region. Positions 329 to 556 (ETLQNNRIVE…DNSMDIRMER (228 aa)) are b. A disordered region spans residues 488-508 (IGASDDSGDKTSEDSGESASD). The span at 494–508 (SGDKTSEDSGESASD) shows a compositional bias: basic and acidic residues. A c region spans residues 557-637 (FLREQKQLNY…GVLAKIFSSK (81 aa)).

The protein belongs to the heat shock protein 90 family. As to quaternary structure, homodimer.

The protein resides in the cytoplasm. Functionally, molecular chaperone. Has ATPase activity. This chain is Chaperone protein HtpG, found in Anaplasma phagocytophilum (strain HZ).